The sequence spans 542 residues: Esterase S (542 aa).

A signal peptide spans 1–22 (MTQILLPIALLCLFAASTLSNP). Cysteines 81 and 100 form a disulfide. Residue asparagine 110 is glycosylated (N-linked (GlcNAc...) asparagine). Residue serine 204 is the Acyl-ester intermediate of the active site. The cysteines at positions 256 and 268 are disulfide-linked. Residue asparagine 396 is glycosylated (N-linked (GlcNAc...) asparagine). Residues cysteine 507 and cysteine 528 are joined by a disulfide bond.

It belongs to the type-B carboxylesterase/lipase family. As to quaternary structure, monomer. In terms of tissue distribution, specifically expressed in the ejaculatory bulbs of male.

The protein localises to the secreted. It catalyses the reaction a carboxylic ester + H2O = an alcohol + a carboxylate + H(+). In terms of biological role, transferred from the ejaculatory bulbs of males to the female genitals upon copulation, plays an important role in the reproductive biology. The sequence is that of Esterase S (EstS) from Drosophila virilis (Fruit fly).